The primary structure comprises 319 residues: MATFEHTTVLLHEAIAALNVRPDGIYVDCTLGGGGHSREILQQLGLEGHLYSFDQDQTAIDYNQSNLATYLERGQVTFIKSNFANLKTELNARGLDHVDGVVYDLGVSSPQFDDAARGFSYQHDAPLDMRMDQSQKLTAQTVVNTWPYADLVRIFYRYGEEKFSKQVARLIERERAVQPIVTTGQLVEIIKNAIPARARRTGGHPAKRVFQAIRIAVNNELGVLETSLEQAIDLINVHGRVSVITFQSLEDRLVKTIFKEHSDLPELPPGLPVIPAEMQPDYRLVSRKPVVPSDAEIEANRRARSAKLRAIERLKITNK.

Residues 34–36, Asp54, Phe83, Asp104, and Gln111 contribute to the S-adenosyl-L-methionine site; that span reads GGH.

It belongs to the methyltransferase superfamily. RsmH family.

Its subcellular location is the cytoplasm. It carries out the reaction cytidine(1402) in 16S rRNA + S-adenosyl-L-methionine = N(4)-methylcytidine(1402) in 16S rRNA + S-adenosyl-L-homocysteine + H(+). Functionally, specifically methylates the N4 position of cytidine in position 1402 (C1402) of 16S rRNA. The chain is Ribosomal RNA small subunit methyltransferase H from Lactiplantibacillus plantarum (strain ATCC BAA-793 / NCIMB 8826 / WCFS1) (Lactobacillus plantarum).